We begin with the raw amino-acid sequence, 225 residues long: Protein YIP4 (225 aa).

Phosphoserine is present on residues serine 27 and serine 28. Helical transmembrane passes span 91-111, 118-138, 154-176, 180-199, and 205-225; these read WDLWGPLIFSLVIALALALST, SVFTVVVALIWFGEAVCSLNI, LGYSSFPLMIASIVCAFVPLIFI, VIVAMYAWTLFAAMGVLQNS, and KLLAVYPLFLFYFSLAWIIFL.

Belongs to the YIP1 family. As to quaternary structure, interacts with the YIP1 family members yip1 and yip5, and with several Rab GTPases.

The protein localises to the membrane. In terms of biological role, may be involved in proper membrane localization of Rab GTPases. The polypeptide is Protein YIP4 (Schizosaccharomyces pombe (strain 972 / ATCC 24843) (Fission yeast)).